The following is a 110-amino-acid chain: Small ribosomal subunit protein bS16 (110 aa).

A disordered region spans residues 87–110; that stretch reads ARQNPIKAVPRKERKAQAEAAAKG.

It belongs to the bacterial ribosomal protein bS16 family.

In Bradyrhizobium sp. (strain BTAi1 / ATCC BAA-1182), this protein is Small ribosomal subunit protein bS16.